Reading from the N-terminus, the 320-residue chain is Mitochondrial glutamate carrier 2 (320 aa).

Solcar repeat units follow at residues 11–97 (LSIS…LRQL), 105–215 (RNLK…LNQL), and 224–313 (ASFT…GIGE). Transmembrane regions (helical) follow at residues 17 to 37 (LINGGIAGLVGVTCVFPIDLA), 66 to 86 (FLGMYRGAAVNLTLVTPEKAI), and 110 to 128 (EMLAGCGAGICQVVITCPM). Phosphoserine is present on S150. 3 consecutive transmembrane segments (helical) span residues 190-210 (GLGATLLRDIPFSIIYFPLFA), 230-250 (FVAGCTAGSVAAVAVTPLDVL), and 293-313 (ALVIAPLFGIAQGVYFIGIGE).

The protein belongs to the mitochondrial carrier (TC 2.A.29) family.

The protein resides in the mitochondrion inner membrane. The enzyme catalyses L-glutamate(in) + H(+)(in) = L-glutamate(out) + H(+)(out). Its function is as follows. Responsible for the transport of glutamate from the cytosol into the mitochondrial matrix with the concomitant import of a proton (symport system). This Mus musculus (Mouse) protein is Mitochondrial glutamate carrier 2 (Slc25a18).